Reading from the N-terminus, the 160-residue chain is Transcription elongation factor GreA (160 aa).

Residues M1 to R72 are a coiled coil.

This sequence belongs to the GreA/GreB family.

Functionally, necessary for efficient RNA polymerase transcription elongation past template-encoded arresting sites. The arresting sites in DNA have the property of trapping a certain fraction of elongating RNA polymerases that pass through, resulting in locked ternary complexes. Cleavage of the nascent transcript by cleavage factors such as GreA or GreB allows the resumption of elongation from the new 3'terminus. GreA releases sequences of 2 to 3 nucleotides. The sequence is that of Transcription elongation factor GreA from Streptococcus pneumoniae (strain Hungary19A-6).